The sequence spans 234 residues: Small ribosomal subunit protein eS4 (234 aa).

The region spanning 38–99 (IPLLIALRDY…GNDYLVSYDR (62 aa)) is the S4 RNA-binding; degenerate domain.

The protein belongs to the eukaryotic ribosomal protein eS4 family.

This is Small ribosomal subunit protein eS4 (rps4e) from Picrophilus torridus (strain ATCC 700027 / DSM 9790 / JCM 10055 / NBRC 100828 / KAW 2/3).